The following is a 1183-amino-acid chain: Protein deacetylase HDAC6 (1183 aa).

The tract at residues M1–P61 is disordered. The span at N18–T29 shows a compositional bias: polar residues. S21 carries the post-translational modification Phosphoserine. R32 bears the Omega-N-methylarginine mark. Residues L66–L75 carry the Nuclear export signal motif. Histone deacetylase regions lie at residues G86–G434 and G512–G830. H215 functions as the 1 in the catalytic mechanism. The 2 role is filled by H641. Residues A972–E1042 are disordered. Over residues T980–S996 the composition is skewed to low complexity. A phosphothreonine mark is found at T990, T995, and T1005. Residues P997–A1008 show a composition bias toward polar residues. S1009 bears the Phosphoserine mark. Low complexity predominate over residues E1021–Q1035. A UBP-type zinc finger spans residues S1079–E1177. Positions 1081, 1083, 1101, 1104, 1113, 1116, and 1121 each coordinate Zn(2+). Positions S1122–Y1124 are ubiquitin binding. Residues H1128, H1132, H1138, C1151, and C1154 each coordinate Zn(2+). Positions W1150–Y1157 are ubiquitin binding.

This sequence belongs to the histone deacetylase family. HD type 2 subfamily. In terms of assembly, forms a trimeric complex in the nucleus consisting of BANP, HDAC6 and KHDRBS1/SAM68; HDAC6 keeps KHDRBS1 in a deacetylated state which inhibits the inclusion of CD44 alternate exons. The complex is disrupted by MAPK1/MAPK3-mediated phosphorylation of BANP which results in BANP export to the cytoplasm. This facilitates acetylation of KHDRBS1 and CD44 variant exon inclusion. Interacts with SIRT2 (via both phosphorylated, unphosphorylated, active or inactive forms); the interaction is necessary for the complex to interact with alpha-tubulin. Under proteasome impairment conditions, interacts with UBD via its histone deacetylase 1 and UBP-type zinc-finger regions. Interacts with BBIP1, CBFA2T3, CYLD, DDIT3/CHOP, ZMYND15, F-actin and HDAC11. Interacts with RIPOR2; this interaction occurs during early myogenic differentiation and prevents HDAC6 to deacetylate tubulin. Interacts with AURKA; AURKA-mediated phosphorylation of HDAC6 promotes deacetylation of alpha-tubulin. Interacts with DYSF; this interaction occurs during early myogenic differentiation. Interacts with TPPP; inhibiting the tubulin deacetylase activity of HDAC6. Interacts with DYNLL1. Interacts with ATP13A2; the interaction results in recruitment of HDAC6 to lysosomes to promote CTTN deacetylation. Interacts with CCDC141 (via the N-terminal region); inhibiting the deacetylase activity of HDAC6. Interacts with IPO7; the interaction facilitates HDAC6 nuclear translocation in dental papilla cells. Requires Zn(2+) as cofactor. Post-translationally, phosphorylated by AURKA; phosphorylation increases HDAC6-mediated deacetylation of alpha-tubulin and subsequent disassembly of cilia. Ubiquitinated. Its polyubiquitination however does not lead to its degradation. In terms of processing, sumoylated in vitro.

The protein resides in the cytoplasm. Its subcellular location is the cytoskeleton. It localises to the nucleus. The protein localises to the perikaryon. It is found in the cell projection. The protein resides in the dendrite. Its subcellular location is the axon. It localises to the cilium. The protein localises to the microtubule organizing center. It is found in the centrosome. The protein resides in the cilium basal body. It carries out the reaction N(6)-acetyl-L-lysyl-[protein] + H2O = L-lysyl-[protein] + acetate. It catalyses the reaction N(6)-acetyl-L-lysyl-[alpha-tubulin] + H2O = L-lysyl-[alpha-tubulin] + acetate. It functions in the pathway protein modification; protein ubiquitination. Functionally, deacetylates a wide range of non-histone substrates. Plays a central role in microtubule-dependent cell motility by mediating deacetylation of tubulin. Required for cilia disassembly via deacetylation of alpha-tubulin. Alpha-tubulin deacetylation results in destabilization of dynamic microtubules. Promotes deacetylation of CTTN, leading to actin polymerization, promotion of autophagosome-lysosome fusion and completion of autophagy. Deacetylates SQSTM1. Deacetylates peroxiredoxins PRDX1 and PRDX2, decreasing their reducing activity. Deacetylates antiviral protein RIGI in the presence of viral mRNAs which is required for viral RNA detection by RIGI. Sequentially deacetylates and polyubiquitinates DNA mismatch repair protein MSH2 which leads to MSH2 degradation, reducing cellular sensitivity to DNA-damaging agents and decreasing cellular DNA mismatch repair activities. Deacetylates DNA mismatch repair protein MLH1 which prevents recruitment of the MutL alpha complex (formed by the MLH1-PMS2 heterodimer) to the MutS alpha complex (formed by the MSH2-MSH6 heterodimer), leading to tolerance of DNA damage. Deacetylates RHOT1/MIRO1 which blocks mitochondrial transport and mediates axon growth inhibition. Deacetylates transcription factor SP1 which leads to increased expression of ENG, positively regulating angiogenesis. Deacetylates KHDRBS1/SAM68 which regulates alternative splicing by inhibiting the inclusion of CD44 alternate exons. Promotes odontoblast differentiation following IPO7-mediated nuclear import and subsequent repression of RUNX2 expression. In addition to its protein deacetylase activity, plays a key role in the degradation of misfolded proteins: when misfolded proteins are too abundant to be degraded by the chaperone refolding system and the ubiquitin-proteasome, mediates the transport of misfolded proteins to a cytoplasmic juxtanuclear structure called aggresome. Probably acts as an adapter that recognizes polyubiquitinated misfolded proteins and targets them to the aggresome, facilitating their clearance by autophagy. This Rattus norvegicus (Rat) protein is Protein deacetylase HDAC6.